The chain runs to 298 residues: MVRQYKIHTNLDGTDDKVWDVTNGKVRFYQPSNLGLQSTNNIWQSNGIGVMGTRSITQPQIEFKLETFGESLEENYQLMKDFVNDILSKKFVTLEYQTEIFQVYADLALADVTKTEGYGKNGTFSEKITFDIITKWYTYENLTFDKIQNGKVIAGMSKIYGGTAPGNYKYIKGTSYTYYGESDIDRLSRWDIKEEIFSFMGILYPKLPKTPAGVRFLDDIGNEYTAIVFKTEQVQDYILINTDVNDETYQGWKGTTALNLFPVMDFERYRTRIIEKGQMELINLSKAEFKIKRKADFV.

Belongs to the skunalikevirus distal tail protein family. Homohexamer. Interacts with the receptor binding protein.

Its subcellular location is the virion. Forms the distal part of the tail. Self-associates as two rings organized back to back, with a central channel allowing DNA ejection. The chain is Distal tail protein from Lactococcus lactis (Lactococcus lactis bacteriophage p2).